The sequence spans 325 residues: Tetraacyldisaccharide 4'-kinase (325 aa).

Residue 55-62 (TAGGNGKT) participates in ATP binding.

The protein belongs to the LpxK family.

It catalyses the reaction a lipid A disaccharide + ATP = a lipid IVA + ADP + H(+). Its pathway is glycolipid biosynthesis; lipid IV(A) biosynthesis; lipid IV(A) from (3R)-3-hydroxytetradecanoyl-[acyl-carrier-protein] and UDP-N-acetyl-alpha-D-glucosamine: step 6/6. Its function is as follows. Transfers the gamma-phosphate of ATP to the 4'-position of a tetraacyldisaccharide 1-phosphate intermediate (termed DS-1-P) to form tetraacyldisaccharide 1,4'-bis-phosphate (lipid IVA). The protein is Tetraacyldisaccharide 4'-kinase of Enterobacter sp. (strain 638).